We begin with the raw amino-acid sequence, 217 residues long: Ribosomal RNA small subunit methyltransferase G (217 aa).

S-adenosyl-L-methionine-binding positions include G76, F81, 128–129 (LE), and R142.

It belongs to the methyltransferase superfamily. RNA methyltransferase RsmG family.

The protein localises to the cytoplasm. It carries out the reaction guanosine(527) in 16S rRNA + S-adenosyl-L-methionine = N(7)-methylguanosine(527) in 16S rRNA + S-adenosyl-L-homocysteine. Functionally, specifically methylates the N7 position of guanine in position 527 of 16S rRNA. This Rhizorhabdus wittichii (strain DSM 6014 / CCUG 31198 / JCM 15750 / NBRC 105917 / EY 4224 / RW1) (Sphingomonas wittichii) protein is Ribosomal RNA small subunit methyltransferase G.